Reading from the N-terminus, the 497-residue chain is Phenylalanine--tRNA ligase alpha subunit (497 aa).

L-phenylalanine contacts are provided by residues threonine 329, glutamine 372–glutamate 374, and tyrosine 412. Glutamate 414 contacts Mg(2+). Phenylalanine 438 contacts L-phenylalanine.

Belongs to the class-II aminoacyl-tRNA synthetase family. Phe-tRNA synthetase alpha subunit type 2 subfamily. In terms of assembly, heterotetramer; dimer of two heterodimers formed by alpha and beta subunits. The cofactor is Mg(2+).

It localises to the cytoplasm. The enzyme catalyses tRNA(Phe) + L-phenylalanine + ATP = L-phenylalanyl-tRNA(Phe) + AMP + diphosphate + H(+). The polypeptide is Phenylalanine--tRNA ligase alpha subunit (farsa) (Danio rerio (Zebrafish)).